The following is a 392-amino-acid chain: Dual-specificity RNA methyltransferase RlmN (392 aa).

E115 (proton acceptor) is an active-site residue. The 238-residue stretch at 121-358 folds into the Radical SAM core domain; that stretch reads EVDRGTLCIS…YKAGYASPIR (238 aa). C128 and C369 are joined by a disulfide. Positions 135, 139, and 142 each coordinate [4Fe-4S] cluster. S-adenosyl-L-methionine-binding positions include 195-196, S227, 249-251, and N326; these read GE and SFH. The active-site S-methylcysteine intermediate is the C369.

It belongs to the radical SAM superfamily. RlmN family. It depends on [4Fe-4S] cluster as a cofactor.

It is found in the cytoplasm. It catalyses the reaction adenosine(2503) in 23S rRNA + 2 reduced [2Fe-2S]-[ferredoxin] + 2 S-adenosyl-L-methionine = 2-methyladenosine(2503) in 23S rRNA + 5'-deoxyadenosine + L-methionine + 2 oxidized [2Fe-2S]-[ferredoxin] + S-adenosyl-L-homocysteine. It carries out the reaction adenosine(37) in tRNA + 2 reduced [2Fe-2S]-[ferredoxin] + 2 S-adenosyl-L-methionine = 2-methyladenosine(37) in tRNA + 5'-deoxyadenosine + L-methionine + 2 oxidized [2Fe-2S]-[ferredoxin] + S-adenosyl-L-homocysteine. In terms of biological role, specifically methylates position 2 of adenine 2503 in 23S rRNA and position 2 of adenine 37 in tRNAs. m2A2503 modification seems to play a crucial role in the proofreading step occurring at the peptidyl transferase center and thus would serve to optimize ribosomal fidelity. The polypeptide is Dual-specificity RNA methyltransferase RlmN (Jannaschia sp. (strain CCS1)).